The sequence spans 518 residues: Putative N-acetylmuramoyl-L-alanine amidase YrvJ (518 aa).

An N-terminal signal peptide occupies residues 1 to 27 (MNKKYFVLIVCIIFTSALFPTFSSVTA). SH3b domains lie at 29 to 91 (QGEA…ITKE), 102 to 164 (SDTV…TSGG), 181 to 243 (STTG…LTSS), and 258 to 320 (AKKA…VQTS). Disordered regions lie at residues 94–121 (ASTS…PGTS) and 160–186 (VTSG…TGTV). 2 stretches are compositionally biased toward low complexity: residues 95 to 108 (STSS…VTST) and 160 to 169 (VTSGGSSSAS). The segment at 322–352 (SAEEAGEPPVSDSPSGNGSLNNKTIIVDPGH) is disordered. The segment covering 333–345 (DSPSGNGSLNNKT) has biased composition (polar residues). A MurNAc-LAA domain is found at 346-514 (IIVDPGHGGK…VTDGIESGLE (169 aa)).

Belongs to the N-acetylmuramoyl-L-alanine amidase 3 family.

It is found in the secreted. Its subcellular location is the cell wall. It carries out the reaction Hydrolyzes the link between N-acetylmuramoyl residues and L-amino acid residues in certain cell-wall glycopeptides.. Functionally, probably involved in cell-wall metabolism. In Bacillus subtilis (strain 168), this protein is Putative N-acetylmuramoyl-L-alanine amidase YrvJ (yrvJ).